We begin with the raw amino-acid sequence, 224 residues long: MADS-box transcription factor 16 (224 aa).

Residues 1 to 61 form the MADS-box domain; that stretch reads MGRGKIEIKR…GKYHEFCSPS (61 aa). One can recognise a K-box domain in the interval 84-174; that stretch reads YENMQRTLSH…QQELGLREEP (91 aa).

In terms of assembly, may interact with the K-box of MADS4, MADS6 and MADS8. May form a heterodimer with MADS4. As to expression, expressed in lodicules, stamens and carpels.

The protein localises to the nucleus. Functionally, probable transcription factor involved in the development of floral organs. Required for normal development of lodicules and stamens (whorls 2 and 3). May function as a heterodimer with MADS4. This is MADS-box transcription factor 16 (MADS16) from Oryza sativa subsp. japonica (Rice).